The primary structure comprises 224 residues: UPF0758 protein RSc2444 (224 aa).

In terms of domain architecture, MPN spans 102–224; that stretch reads TLESPQSVKD…VYSFLEHGKM (123 aa). Zn(2+) contacts are provided by histidine 173, histidine 175, and aspartate 186. The short motif at 173–186 is the JAMM motif element; the sequence is HNHPTGHVEPSESD.

The protein belongs to the UPF0758 family.

In Ralstonia nicotianae (strain ATCC BAA-1114 / GMI1000) (Ralstonia solanacearum), this protein is UPF0758 protein RSc2444.